The following is a 182-amino-acid chain: Small ribosomal subunit protein uS4c (182 aa).

Positions 82–143 (MRLDNILFRL…KERSKVLIQN (62 aa)) constitute an S4 RNA-binding domain.

The protein belongs to the universal ribosomal protein uS4 family. Part of the 30S ribosomal subunit. Contacts protein S5. The interaction surface between S4 and S5 is involved in control of translational fidelity.

It is found in the plastid. The protein localises to the chloroplast. One of the primary rRNA binding proteins, it binds directly to 16S rRNA where it nucleates assembly of the body of the 30S subunit. In terms of biological role, with S5 and S12 plays an important role in translational accuracy. This is Small ribosomal subunit protein uS4c (rps4) from Neomarica sp. (strain Lejeune 1997).